The primary structure comprises 636 residues: Receptor-like kinase LIP1 (636 aa).

Positions 18–57 (NAPCTTNETNDDNVEHDEFRPPVVATTKRTEEREPAEQQP) are disordered. One can recognise a Protein kinase domain in the interval 74–352 (FRQECLLGEG…SDVMVALSFL (279 aa)). ATP contacts are provided by residues 80 to 88 (LGEGGFGRV) and K103. Residue D201 is the Proton acceptor of the active site. S205 and S236 each carry phosphoserine. T242 carries the phosphothreonine modification. At Y250 the chain carries Phosphotyrosine. Positions 389–636 (FCISRKDVGN…EEEHISSDHD (248 aa)) are disordered. Residues 403–434 (SSDSEDEEEEKEQKAEKEEESTSKKRQEQEET) adopt a coiled-coil conformation. A compositionally biased stretch (basic and acidic residues) spans 413–431 (KEQKAEKEEESTSKKRQEQ). A compositionally biased stretch (acidic residues) spans 432-455 (EETATDSDDESDSNSEKDQEEEQS). Positions 480 to 489 (TNATAQSLKI) are enriched in polar residues. 2 stretches are compositionally biased toward basic and acidic residues: residues 522–531 (DSGRDHDDSS) and 554–566 (HETR…DDSP). The segment covering 567–576 (RNTSMRINSL) has biased composition (polar residues). Composition is skewed to basic and acidic residues over residues 588–603 (NHQT…KSED) and 619–636 (SLHR…SDHD).

This sequence belongs to the protein kinase superfamily. Ser/Thr protein kinase family. In terms of assembly, interacts with PRK6. Palmitoylated. In terms of tissue distribution, expressed in mature pollen and in germinating pollen tubes.

The protein resides in the cell membrane. It localises to the cytoplasm. Its function is as follows. Involved in pollen tube guidance into micropyle. Participates in perception of the ovule-secreted peptide signal LURE1. This Arabidopsis thaliana (Mouse-ear cress) protein is Receptor-like kinase LIP1.